A 315-amino-acid polypeptide reads, in one-letter code: tRNA U34 carboxymethyltransferase (315 aa).

Residues Lys-79, Trp-93, Lys-98, Gly-117, 142–144 (DPS), 169–170 (VE), Tyr-193, and Arg-307 each bind carboxy-S-adenosyl-L-methionine.

This sequence belongs to the class I-like SAM-binding methyltransferase superfamily. CmoB family. As to quaternary structure, homotetramer.

The enzyme catalyses carboxy-S-adenosyl-L-methionine + 5-hydroxyuridine(34) in tRNA = 5-carboxymethoxyuridine(34) in tRNA + S-adenosyl-L-homocysteine + H(+). Functionally, catalyzes carboxymethyl transfer from carboxy-S-adenosyl-L-methionine (Cx-SAM) to 5-hydroxyuridine (ho5U) to form 5-carboxymethoxyuridine (cmo5U) at position 34 in tRNAs. The protein is tRNA U34 carboxymethyltransferase of Helicobacter hepaticus (strain ATCC 51449 / 3B1).